A 110-amino-acid chain; its full sequence is Chagasin (110 aa).

A BC loop motif is present at residues 29 to 34 (NPTTGF). The DE loop signature appears at 59-68 (PPDSKLLGAG). The short motif at 91-100 (RPWTGPSHDS) is the FG loop element.

It belongs to the protease inhibitor I42 family. In terms of assembly, interacts with cruzipain.

Its subcellular location is the flagellar pocket. It is found in the cytoplasmic vesicle. The protein localises to the cell surface. Cysteine protease inhibitor. Inhibits cysteine protease cruzipain. The polypeptide is Chagasin (cha) (Trypanosoma cruzi).